The following is a 400-amino-acid chain: Cell division protein FtsZ 2 (400 aa).

Over residues 1 to 16 the composition is skewed to basic and acidic residues; sequence MQDIVREAMERDEAER. The segment at 1 to 30 is disordered; it reads MQDIVREAMERDEAERQTQSSLEDSDDQFG. GTP-binding positions include 41-45, 128-130, Glu-159, Arg-162, and Asp-205; these read GAGNN and GTG. Positions 338 to 400 are disordered; it reads VLGPSTQKQA…EKNNGLDVIR (63 aa). The segment covering 352-364 has biased composition (low complexity); the sequence is QSIQSRESQQQHS. Polar residues predominate over residues 365 to 382; it reads GSEFDSSERAQTAQSGTW. Residues 385–400 show a composition bias toward basic and acidic residues; sequence GGRDEVEKNNGLDVIR.

This sequence belongs to the FtsZ family. As to quaternary structure, homodimer. Polymerizes to form a dynamic ring structure in a strictly GTP-dependent manner. Interacts directly with several other division proteins. Interacts with SepF.

The protein localises to the cytoplasm. Essential cell division protein that forms a contractile ring structure (Z ring) at the future cell division site. The regulation of the ring assembly controls the timing and the location of cell division. One of the functions of the FtsZ ring is to recruit other cell division proteins to the septum to produce a new cell wall between the dividing cells. Binds GTP and shows GTPase activity. Required for division ring constriction. In Haloferax volcanii (strain ATCC 29605 / DSM 3757 / JCM 8879 / NBRC 14742 / NCIMB 2012 / VKM B-1768 / DS2) (Halobacterium volcanii), this protein is Cell division protein FtsZ 2.